The primary structure comprises 412 residues: Histidinol dehydrogenase (412 aa).

Positions 118, 176, and 199 each coordinate NAD(+). Positions 222, 244, and 247 each coordinate substrate. Zn(2+) contacts are provided by glutamine 244 and histidine 247. Active-site proton acceptor residues include glutamate 311 and histidine 312. Histidine 312, aspartate 345, glutamate 399, and histidine 404 together coordinate substrate. A Zn(2+)-binding site is contributed by aspartate 345. Histidine 404 provides a ligand contact to Zn(2+).

The protein belongs to the histidinol dehydrogenase family. Zn(2+) serves as cofactor.

The enzyme catalyses L-histidinol + 2 NAD(+) + H2O = L-histidine + 2 NADH + 3 H(+). Its pathway is amino-acid biosynthesis; L-histidine biosynthesis; L-histidine from 5-phospho-alpha-D-ribose 1-diphosphate: step 9/9. Its function is as follows. Catalyzes the sequential NAD-dependent oxidations of L-histidinol to L-histidinaldehyde and then to L-histidine. This chain is Histidinol dehydrogenase, found in Thermus thermophilus (strain ATCC BAA-163 / DSM 7039 / HB27).